A 346-amino-acid polypeptide reads, in one-letter code: tRNA N6-adenosine threonylcarbamoyltransferase (346 aa).

Fe cation-binding residues include His-111 and His-115. Substrate is bound by residues 134–138, Asp-167, Gly-180, and Asn-279; that span reads LVSGG. Fe cation is bound at residue Asp-307.

The protein belongs to the KAE1 / TsaD family. Requires Fe(2+) as cofactor.

It is found in the cytoplasm. It carries out the reaction L-threonylcarbamoyladenylate + adenosine(37) in tRNA = N(6)-L-threonylcarbamoyladenosine(37) in tRNA + AMP + H(+). In terms of biological role, required for the formation of a threonylcarbamoyl group on adenosine at position 37 (t(6)A37) in tRNAs that read codons beginning with adenine. Is involved in the transfer of the threonylcarbamoyl moiety of threonylcarbamoyl-AMP (TC-AMP) to the N6 group of A37, together with TsaE and TsaB. TsaD likely plays a direct catalytic role in this reaction. This Burkholderia vietnamiensis (strain G4 / LMG 22486) (Burkholderia cepacia (strain R1808)) protein is tRNA N6-adenosine threonylcarbamoyltransferase.